We begin with the raw amino-acid sequence, 701 residues long: Elongation factor G (701 aa).

In terms of domain architecture, tr-type G spans 8-290 (SRYRNIGISA…AVIEYLPAPT (283 aa)). Residues 17 to 24 (AHIDAGKT), 88 to 92 (DTPGH), and 142 to 145 (NKMD) each bind GTP.

This sequence belongs to the TRAFAC class translation factor GTPase superfamily. Classic translation factor GTPase family. EF-G/EF-2 subfamily.

It localises to the cytoplasm. Functionally, catalyzes the GTP-dependent ribosomal translocation step during translation elongation. During this step, the ribosome changes from the pre-translocational (PRE) to the post-translocational (POST) state as the newly formed A-site-bound peptidyl-tRNA and P-site-bound deacylated tRNA move to the P and E sites, respectively. Catalyzes the coordinated movement of the two tRNA molecules, the mRNA and conformational changes in the ribosome. This is Elongation factor G from Actinobacillus pleuropneumoniae serotype 5b (strain L20).